The following is a 320-amino-acid chain: UDP-N-acetylenolpyruvoylglucosamine reductase (320 aa).

An FAD-binding PCMH-type domain is found at 35–216 (RAGGPAQVLF…KQAMDEVQHH (182 aa)). Residue R181 is part of the active site. S230 (proton donor) is an active-site residue. The active site involves E300.

This sequence belongs to the MurB family. It depends on FAD as a cofactor.

The protein localises to the cytoplasm. It carries out the reaction UDP-N-acetyl-alpha-D-muramate + NADP(+) = UDP-N-acetyl-3-O-(1-carboxyvinyl)-alpha-D-glucosamine + NADPH + H(+). Its pathway is cell wall biogenesis; peptidoglycan biosynthesis. Functionally, cell wall formation. This is UDP-N-acetylenolpyruvoylglucosamine reductase from Brucella anthropi (strain ATCC 49188 / DSM 6882 / CCUG 24695 / JCM 21032 / LMG 3331 / NBRC 15819 / NCTC 12168 / Alc 37) (Ochrobactrum anthropi).